The sequence spans 443 residues: D(2) dopamine receptor (443 aa).

The Extracellular segment spans residues 1–37; it reads MDPLNLSWYDDDLERQNWSRPFNGSDGKADRPHYNYY. 3 N-linked (GlcNAc...) asparagine glycosylation sites follow: Asn-5, Asn-17, and Asn-23. A helical transmembrane segment spans residues 38–60; it reads ATLLTLLIAVIVFGNVLVCMAVS. Over 61–70 the chain is Cytoplasmic; that stretch reads REKALQTTTN. A helical transmembrane segment spans residues 71-93; it reads YLIVSLAVADLLVATLVMPWVVY. The Extracellular segment spans residues 94–108; sequence LEVVGEWKFSRIHCD. Cys-107 and Cys-182 are oxidised to a cystine. The chain crosses the membrane as a helical span at residues 109–130; it reads IFVTLDVMMCTASILNLCAISI. Over 131-151 the chain is Cytoplasmic; it reads DRYTAVAMPMLYNTRYSSKRR. Residues 152-172 traverse the membrane as a helical segment; sequence VTVMISIVWVLSFTISCPLLF. The Extracellular segment spans residues 173–188; that stretch reads GLNNADQNECIIANPA. The chain crosses the membrane as a helical span at residues 189–213; sequence FVVYSSIVSFYVPFIVTLLVYIKIY. The interaction with PPP1R9B stretch occupies residues 211-373; it reads KIYIVLRRRR…SQQKEKKATQ (163 aa). Residues 214 to 373 lie on the Cytoplasmic side of the membrane; sequence IVLRRRRKRV…SQQKEKKATQ (160 aa). The interval 281–332 is disordered; the sequence is MEMLSSTSPPERTRYSPIPPSHHQLTLPDPSHHGLHSTPDSPAKPEKNGHAK. Basic and acidic residues predominate over residues 323 to 332; it reads AKPEKNGHAK. The helical transmembrane segment at 374–395 threads the bilayer; the sequence is MLAIVLGVFIICWLPFFITHIL. Residues 396–409 lie on the Extracellular side of the membrane; the sequence is NIHCDCNIPPVLYS. A disulfide bond links Cys-399 and Cys-401. Residues 410–431 form a helical membrane-spanning segment; the sequence is AFTWLGYVNSAVNPIIYTTFNI. At 432-443 the chain is on the cytoplasmic side; sequence EFRKAFLKILHC. Cys-443 carries the S-palmitoyl cysteine lipid modification.

The protein belongs to the G-protein coupled receptor 1 family. In terms of assembly, forms homo- and heterooligomers with DRD4. The interaction with DRD4 may modulate agonist-induced downstream signaling. Interacts with CADPS and CADPS2. Interacts with GPRASP1, PPP1R9B and CLIC6. Interacts with ARRB2. Interacts with HTR2A. Interacts with GNAI2 isoform sGi2, the interaction allows the creation of an intracellular pool of DRD2 that can be released to cell surface upon agonist stimulation. Interacts with DRD1. Interacts with KCNA2. In terms of processing, palmitoylated. Palmitoylation which is required for proper localization to the plasma membrane and stability of the receptor could be carried on by ZDHHC4, ZDHHC3 and ZDHHC8. In terms of tissue distribution, expressed in the anterior pituitary gland.

The protein resides in the cell membrane. It is found in the golgi apparatus membrane. Its function is as follows. Dopamine receptor whose activity is mediated by G proteins which inhibit adenylyl cyclase. Positively regulates postnatal regression of retinal hyaloid vessels via suppression of VEGFR2/KDR activity, downstream of OPN5. This chain is D(2) dopamine receptor (DRD2), found in Homo sapiens (Human).